A 483-amino-acid polypeptide reads, in one-letter code: Rhamnulokinase (483 aa).

An ATP-binding site is contributed by 11–15 (ASSGR). Residues G79 and 234 to 236 (HDT) contribute to the substrate site. The active-site Proton acceptor is the D235. T257 contributes to the ATP binding site. Position 294 (N294) interacts with substrate. Residue Q302 participates in ATP binding. The cysteines at positions 352 and 369 are disulfide-linked. G401 contributes to the ATP binding site.

It belongs to the rhamnulokinase family. Mg(2+) serves as cofactor.

The enzyme catalyses L-rhamnulose + ATP = L-rhamnulose 1-phosphate + ADP + H(+). The protein operates within carbohydrate degradation; L-rhamnose degradation; glycerone phosphate from L-rhamnose: step 2/3. Involved in the catabolism of L-rhamnose (6-deoxy-L-mannose). Catalyzes the transfer of the gamma-phosphate group from ATP to the 1-hydroxyl group of L-rhamnulose to yield L-rhamnulose 1-phosphate. The polypeptide is Rhamnulokinase (Listeria monocytogenes serovar 1/2a (strain ATCC BAA-679 / EGD-e)).